A 520-amino-acid polypeptide reads, in one-letter code: Maturase K (520 aa).

Belongs to the intron maturase 2 family. MatK subfamily.

The protein localises to the plastid. It localises to the chloroplast. In terms of biological role, usually encoded in the trnK tRNA gene intron. Probably assists in splicing its own and other chloroplast group II introns. This is Maturase K from Ruscus aculeatus (Butcher's broom).